Here is a 174-residue protein sequence, read N- to C-terminus: Large ribosomal subunit protein uL6 (174 aa).

This sequence belongs to the universal ribosomal protein uL6 family. As to quaternary structure, part of the 50S ribosomal subunit.

Its function is as follows. This protein binds to the 23S rRNA, and is important in its secondary structure. It is located near the subunit interface in the base of the L7/L12 stalk, and near the tRNA binding site of the peptidyltransferase center. This is Large ribosomal subunit protein uL6 from Stenotrophomonas maltophilia (strain R551-3).